A 322-amino-acid chain; its full sequence is Protein-L-isoaspartate O-methyltransferase (322 aa).

A disordered region spans residues 1-101; it reads MSGERAKRFP…AKQGDRSAAP (101 aa). The span at 14–29 shows a compositional bias: basic and acidic residues; it reads EDLKREPRKPEGRVAE. Composition is skewed to low complexity over residues 33–51 and 76–91; these read AGDA…PAAA and HAPA…PQGG. The active site involves Ser-170.

It belongs to the methyltransferase superfamily. L-isoaspartyl/D-aspartyl protein methyltransferase family.

It is found in the cytoplasm. The catalysed reaction is [protein]-L-isoaspartate + S-adenosyl-L-methionine = [protein]-L-isoaspartate alpha-methyl ester + S-adenosyl-L-homocysteine. Its function is as follows. Catalyzes the methyl esterification of L-isoaspartyl residues in peptides and proteins that result from spontaneous decomposition of normal L-aspartyl and L-asparaginyl residues. It plays a role in the repair and/or degradation of damaged proteins. The sequence is that of Protein-L-isoaspartate O-methyltransferase from Burkholderia mallei (strain NCTC 10247).